Consider the following 314-residue polypeptide: MAQNGKKKIGLIGGGQIGGNLALLAVQKSLGDVVLYDIPAAEGLVKGKALDINQLAAVDGYDCRVKGTTDWKDVAGSDVIIITAGMPRKPGMSREDLLEINLKIMTDVAGNIKQHAPNAFVINVANPLDAMVFALHKIAGLPKHMVAGMAGVLDTSRFKCFVAEALGCSIRDVEALVLGGHGDDMVPLVRHSTVGGVPLTELIAKDKLDAIIKRTREGGAELVGLYKTGSAYFGPAASAIAMAESFLQDRKRVLPAAALLEGQYGINGYFFGVPVQIGAGGVEKIHTVELNDGEKAELEKSFQSVKKTVDSVKL.

Residues G13 to G18 and D37 each bind NAD(+). 2 residues coordinate substrate: R88 and R94. NAD(+) contacts are provided by residues N101 and V124–N126. Positions 126 and 157 each coordinate substrate. The active-site Proton acceptor is H181.

The protein belongs to the LDH/MDH superfamily. MDH type 3 family.

The catalysed reaction is (S)-malate + NAD(+) = oxaloacetate + NADH + H(+). Functionally, catalyzes the reversible oxidation of malate to oxaloacetate. The chain is Malate dehydrogenase from Myxococcus xanthus.